A 311-amino-acid polypeptide reads, in one-letter code: Pyrimidine-specific ribonucleoside hydrolase RihA (311 aa).

The active site involves His240.

This sequence belongs to the IUNH family. RihA subfamily.

Hydrolyzes with equal efficiency cytidine or uridine to ribose and cytosine or uracil, respectively. This Escherichia coli O139:H28 (strain E24377A / ETEC) protein is Pyrimidine-specific ribonucleoside hydrolase RihA.